The primary structure comprises 204 residues: Large ribosomal subunit protein eL15 (204 aa).

The protein belongs to the eukaryotic ribosomal protein eL15 family. As to quaternary structure, component of the large ribosomal subunit.

The protein localises to the cytoplasm. In terms of biological role, component of the large ribosomal subunit. The ribosome is a large ribonucleoprotein complex responsible for the synthesis of proteins in the cell. The polypeptide is Large ribosomal subunit protein eL15 (rpl15) (Siniperca knerii (Big-eye mandarin fish)).